Here is a 518-residue protein sequence, read N- to C-terminus: Cytochrome P450 monooxygenase atnE (518 aa).

The chain crosses the membrane as a helical span at residues 11-31 (FLAAFAVWMGVVVLAFAIFCV). Asn184 is a glycosylation site (N-linked (GlcNAc...) asparagine). Cys458 contacts heme.

It belongs to the cytochrome P450 family. The cofactor is heme.

It is found in the membrane. The protein operates within secondary metabolite biosynthesis. Cytochrome P450 monooxygenase; part of the gene cluster that mediates the biosynthesis of aspercryptins, linear lipopeptides built from six amino acids including 2 highly unusual and nonproteogenic amino acids, 2-amino-octanoic acid (2aoa) and 2-amino-dodecanol (2adol). The core structure of aspercryptins is as follows: Ser/Ala-Thr-Ile/Val-2aoa-Asn-2adol. The first step of aspercryptin biosynthesis is the generation of the fatty acid precursors, octanoic and dodecanoic acids, by the FAS subunits atnF and atnM. The fatty acid precursors are likely transformed into the corresponding alpha-amino fatty acids in three steps. First, they are hydroxylated by the cytochrome P450 monooxygenase atnE, then oxidized to the corresponding alpha-keto acids by the NAD(P)-dependent oxidoreductase atnD, and finally converted to the alpha-amino fatty acids by the PLP-dependent aminotransferases atnH or atnJ. the alpha-amino fatty acids, 2-amino-octanoic and 2-amino-dodecanoic acids, are recognized, activated, and covalently tethered to the NRPS atnA by its fourth and sixth adenylation domains. The second module of atnA is the Thr module and contains an epimerase (E) domain responsible for the epimerization of Thr to D-allo-Thr. Additionally, despite atnA having only one epimerase domain, the first amino acid of aspercryptin A1 is D-Ser, suggesting that serine is either loaded directly as D-Ser on the first module or that the epimerase domain in the threonine module epimerizes both L-Ser and L-Thr. After condensation of the hexapeptide of aspercryptin, the C-terminal reductase (TE) domain might be involved in the reductive release and production of the aldehyde hexapeptide. Further reduction would generate aspercryptins. The variety of aspercryptins produced reflects the flexibility of the atnA NRPS, allowing incorporation of alanine instead of serine, valine for isoleucine, and a C10 fatty amino alcohol instead of the C12 version. AtnB seems to be involved in the selectivity for Ile versus Val by the third module. Moreover, type B, C and D aspercryptins have an additional N-terminal cichorine, acetyl and propionyl group respectively. The polypeptide is Cytochrome P450 monooxygenase atnE (Emericella nidulans (strain FGSC A4 / ATCC 38163 / CBS 112.46 / NRRL 194 / M139) (Aspergillus nidulans)).